The chain runs to 527 residues: Plant-specific TFIIB-related protein PTF2 (527 aa).

A TFIIB-type zinc finger spans residues 1-30 (MRCKRCNGSNFERDEDTGNSYCGGCGTLRE).

As to quaternary structure, can form homodimer. Interacts with TBP2. In terms of tissue distribution, expressed in shoot apical meristems, root tips, primordia of lateral roots, inflorescences, developing pollen grains and embryos.

Its subcellular location is the nucleus. Plant-specific TFIIB-related protein that plays important roles in pollen germination and embryogenesis, possibly by regulating gene expression through interaction with TBP2 and the subunits of RNA polymerases. Binds double-stranded DNA in vitro. This is Plant-specific TFIIB-related protein PTF2 from Arabidopsis thaliana (Mouse-ear cress).